A 569-amino-acid chain; its full sequence is CTP synthase (569 aa).

The Glutamine amidotransferase type-1 domain maps to 313-569 (RIAMVGKYTG…NASLERLKKM (257 aa)). The active-site Nucleophile is Cys410. Active-site residues include His541 and Glu543.

It belongs to the CTP synthase family.

It catalyses the reaction UTP + L-glutamine + ATP + H2O = CTP + L-glutamate + ADP + phosphate + 2 H(+). It participates in pyrimidine metabolism; CTP biosynthesis via de novo pathway; CTP from UDP: step 2/2. Functionally, catalyzes the ATP-dependent amination of UTP to CTP with either L-glutamine or ammonia as the source of nitrogen. The sequence is that of CTP synthase (ctps) from Dictyostelium discoideum (Social amoeba).